A 378-amino-acid polypeptide reads, in one-letter code: SWI/SNF-related matrix-associated actin-dependent regulator of chromatin subfamily B member 1 (378 aa).

The DNA-binding stretch occupies residues 1-106 (MIMALSKTFG…DEKYKAVSIS (106 aa)).

This sequence belongs to the SNF5 family. In terms of assembly, component of the multiprotein chromatin-remodeling complexes SWI/SNF. Component of neural progenitors-specific chromatin remodeling complex (npBAF complex) and the neuron-specific chromatin remodeling complex (nBAF complex). Component of the BAF (SWI/SNF) chromatin remodeling complex. Component of the SWI/SNF-B (PBAF) chromatin remodeling complex. Binds to double-stranded DNA.

The protein localises to the nucleus. Involved in chromatin-remodeling. Core component of the BAF (SWI/SNF) complex. This ATP-dependent chromatin-remodeling complex plays important roles in cell proliferation and differentiation, in cellular antiviral activities and inhibition of tumor formation. Belongs to the neural progenitors-specific chromatin remodeling complex (npBAF complex) and the neuron-specific chromatin remodeling complex (nBAF complex) and may play a role in neural development. This Xenopus laevis (African clawed frog) protein is SWI/SNF-related matrix-associated actin-dependent regulator of chromatin subfamily B member 1 (smarcb1).